A 78-amino-acid polypeptide reads, in one-letter code: Putative membrane protein insertion efficiency factor (78 aa).

The protein belongs to the UPF0161 family.

It localises to the cell membrane. Functionally, could be involved in insertion of integral membrane proteins into the membrane. In Bacillus cereus (strain G9842), this protein is Putative membrane protein insertion efficiency factor.